The following is a 126-amino-acid chain: MRRSTEFGVKTAGGSMTTIFERIIEGAVECDKVFEDENFIVIKDKFPQAPVHLLIIPKKHIEKLQDMQSDDFSLLSEAGKIIQLMARDFGIENGYRVVINNGLEGGQSVFHLHIHLLGGGLLGSIA.

One can recognise an HIT domain in the interval 19–126 (IFERIIEGAV…LGGGLLGSIA (108 aa)). Residues 111–115 (HLHIH) carry the Histidine triad motif motif.

This is an uncharacterized protein from Chlamydia muridarum (strain MoPn / Nigg).